Reading from the N-terminus, the 801-residue chain is Protein ACCUMULATION AND REPLICATION OF CHLOROPLASTS 6, chloroplastic (801 aa).

A chloroplast-targeting transit peptide spans 1-67 (MEALSHVGIG…SSSFATATTT (67 aa)). The Stromal portion of the chain corresponds to 68-618 (ATLVSPPPSI…ADMLKEASVK (551 aa)). The 65-residue stretch at 89 to 153 (DFYQVLGAQT…RSRREYNEGL (65 aa)) folds into the J domain. Residues 619-638 (ILAAGVAIGLISLFSQKYFL) form a helical membrane-spanning segment. Over 639-801 (KSSSSFQRKD…KITEGSVLAS (163 aa)) the chain is Chloroplast intermembrane. An interaction with PDV2 region spans residues 639-801 (KSSSSFQRKD…KITEGSVLAS (163 aa)).

As to quaternary structure, self-interacts. Part of a complex made of ARC3, ARC6, FTSZ1 and FTSZ2. Interacts with FTSZ2-1 and FTSZ2-2 (via C-terminus), but not with FTSZ1; this interaction enables ARC3 binding to FTSZ2. Binds to CDT1A. Interacts (via C-terminus) with PDV2 (via C-terminus) in the chloroplast intermembrane space; this interaction induces homodimerization and leads to the formation of a heterotetramer containing two ARC6 and two PDV2 subunits. Interacts with MCD1 in the chloroplast stroma and facilitates its subsequent binding to FtsZ2-1. Interacts (via J domain) with CJD1 (via J-like domain). In terms of tissue distribution, mostly expressed in young leaves.

The protein resides in the plastid. The protein localises to the chloroplast inner membrane. Component of the plastid division machinery consisting in a binary fission accomplished by the simultaneous constriction of the FtsZ ring on the stromal side of the inner envelope membrane, and the ARC5 ring on the cytosolic side of the outer envelope membrane. Involved in the initiation of proplastid and plastid division (including chloroplasts, statoliths and leukoplasts). Promotes the assembly and/or stabilization of the plastid-dividing FtsZ ring, functioning as an antagonistic regulator of FtsZ dynamics against CDP1 and facilitating MCD1 positioning to membrane tethered FtsZ filaments to form the chloroplast Z-Ring; inhibits GDP-induced disassembly of FTSZ2 but enables ARC3 binding to FTSZ2-1. Relays plastid division site position between stroma and outer surface via interactions with the stromal FtsZ ring and the outer membrane PDV2 that recruits cytoplasmic ARC5 ring. Required for plastid equatorial positioning of PDV2 and ARC5. May contribute to gravitropism in stems and hypocotyls. Seems to influence stromule (stroma-filled tubular extensions of the plastid envelope membrane) length and frequency. In Arabidopsis thaliana (Mouse-ear cress), this protein is Protein ACCUMULATION AND REPLICATION OF CHLOROPLASTS 6, chloroplastic.